The primary structure comprises 285 residues: 4-diphosphocytidyl-2-C-methyl-D-erythritol kinase (285 aa).

Lys10 is an active-site residue. 93 to 103 (PIGGGLGGGSS) serves as a coordination point for ATP. Asp135 is a catalytic residue.

Belongs to the GHMP kinase family. IspE subfamily.

The catalysed reaction is 4-CDP-2-C-methyl-D-erythritol + ATP = 4-CDP-2-C-methyl-D-erythritol 2-phosphate + ADP + H(+). Its pathway is isoprenoid biosynthesis; isopentenyl diphosphate biosynthesis via DXP pathway; isopentenyl diphosphate from 1-deoxy-D-xylulose 5-phosphate: step 3/6. Catalyzes the phosphorylation of the position 2 hydroxy group of 4-diphosphocytidyl-2C-methyl-D-erythritol. This Vesicomyosocius okutanii subsp. Calyptogena okutanii (strain HA) protein is 4-diphosphocytidyl-2-C-methyl-D-erythritol kinase.